Reading from the N-terminus, the 209-residue chain is uncharacterized protein (209 aa).

Residues valine 39–aspartate 75 are a coiled coil. The disordered stretch occupies residues threonine 103 to lysine 131. Residues asparagine 116–serine 129 are compositionally biased toward polar residues.

The protein belongs to the asfivirus K205R family.

The protein resides in the host cytoplasm. Induces host endoplasmic reticulum stress and consequently activates autophagy and NF-kappa-B signaling pathway. In turn, may induce autophagy-mediated STING1 degradation and innate immune evasion. This is an uncharacterized protein from Ornithodoros (relapsing fever ticks).